The sequence spans 759 residues: Tripartite motif-containing protein 46 (759 aa).

Residues 1 to 166 (MAEGEDMQTF…VERYRQSVSV (166 aa)) are required for proximal axon localization, axon formation and migration. The segment at 33–59 (CPVCQEMYKQPLVLPCTHNVCQACARE) adopts an RING-type 1; degenerate zinc-finger fold. The disordered stretch occupies residues 67–98 (IGHGGDPSSEPTSPASTPSTRSPRLSRRTLPK). The segment covering 73 to 89 (PSSEPTSPASTPSTRSP) has biased composition (low complexity). The RING-type 2; degenerate zinc-finger motif lies at 172-231 (CQLCKPPPLEATKGCTECRATFCNECFKLFHPWGTQKAQHEPTLPTLSFRPKGLMCPDHK). A B box-type zinc finger spans residues 222-263 (PKGLMCPDHKEEVTHYCKTCQRLVCQLCRVRRTHSGHKITPV). The Zn(2+) site is built by Cys227, His230, Cys249, and His255. Positions 322-400 (AVLEEKRASL…RATEALQTFR (79 aa)) form a coiled coil. The residue at position 330 (Ser330) is a Phosphoserine. One can recognise a COS domain in the interval 370–427 (LKETDQPCFVQAAKQLHNRIARATEALQTFRPAASSSFRHCQLDVGREMKLLTELSFL). Residues 411-429 (QLDVGREMKLLTELSFLRV) are required for microtubule association, proximal axon localization and axon formation. The region spanning 429 to 528 (VPEAPVIDTQ…EDVHLHTPPA (100 aa)) is the Fibronectin type-III domain. In terms of domain architecture, B30.2/SPRY spans 526–747 (PPAPVLHFFL…LQEPVGTKPE (222 aa)). Ser627 is subject to Phosphoserine.

The protein belongs to the TRIM/RBCC family. As to quaternary structure, interacts with TUBB3 and TUBA4A. In terms of tissue distribution, expressed in the central nervous system, including pyramidal neurons and interneurons in the cortex and hippocampus and all neuronal cell types in the cerebral and cerebellar cortex, and in the peripheral nervous system, including the dorsal root ganglion neurons.

The protein resides in the cell projection. The protein localises to the axon. It localises to the cytoplasm. Its subcellular location is the cytoskeleton. Functionally, microtubule-associated protein that is involved in the formation of parallel microtubule bundles linked by cross-bridges in the proximal axon. Required for the uniform orientation and maintenance of the parallel microtubule fascicles, which are important for efficient cargo delivery and trafficking in axons. Thereby also required for proper axon formation, the establishment of neuronal polarity and proper neuronal migration. The polypeptide is Tripartite motif-containing protein 46 (Trim46) (Mus musculus (Mouse)).